We begin with the raw amino-acid sequence, 239 residues long: 7-cyano-7-deazaguanine synthase (239 aa).

Position 8–18 (Phe8–Leu18) interacts with ATP. Residues Cys194, Cys209, Cys212, and Cys215 each contribute to the Zn(2+) site.

The protein belongs to the QueC family.

It carries out the reaction 7-carboxy-7-deazaguanine + NH4(+) + ATP = 7-cyano-7-deazaguanine + ADP + phosphate + H2O + H(+). Its pathway is purine metabolism; 7-cyano-7-deazaguanine biosynthesis. In terms of biological role, catalyzes the ATP-dependent conversion of 7-carboxy-7-deazaguanine (CDG) to 7-cyano-7-deazaguanine (preQ(0)). This chain is 7-cyano-7-deazaguanine synthase, found in Pyrococcus abyssi (strain GE5 / Orsay).